Here is a 394-residue protein sequence, read N- to C-terminus: Mucosal addressin cell adhesion molecule 1 (394 aa).

An N-terminal signal peptide occupies residues 1-19 (MEPILALLLALGPFQLSRG). Ig-like domains are found at residues 20-107 (QSFQ…ILVY), 108-225 (AFPD…TSPE), and 256-345 (PSTP…YVTG). Topologically, residues 20-353 (QSFQVNPPEP…TGQVIPNPSS (334 aa)) are extracellular. A glycan (N-linked (GlcNAc...) asparagine) is linked at N42. Cystine bridges form between C43/C89, C47/C93, and C130/C198. Residues 219 to 255 (QSQTSPEPPSTTSAKPYILTSSHTTKAVSTGLSSVAL) form a mucin-like region. The cysteines at positions 282 and 330 are disulfide-linked. A helical membrane pass occupies residues 354 to 374 (MVALWIGSLVLGLLALAFLAY). Residues 375-394 (CLWKRYRPGPLPDSSSCTLL) lie on the Cytoplasmic side of the membrane.

In terms of assembly, homodimer. In terms of tissue distribution, detected in Peyer patches and mesenteric lymph nodes but not in spleen.

It is found in the membrane. In terms of biological role, cell adhesion leukocyte receptor expressed by mucosal venules, helps to direct lymphocyte traffic into mucosal tissues including the Peyer patches and the intestinal lamina propria. It can bind both the integrin alpha-4/beta-7 and L-selectin, regulating both the passage and retention of leukocytes. This Rattus norvegicus (Rat) protein is Mucosal addressin cell adhesion molecule 1 (Madcam1).